Reading from the N-terminus, the 338-residue chain is Ketol-acid reductoisomerase (NADP(+)) (338 aa).

The region spanning 1–181 is the KARI N-terminal Rossmann domain; it reads MKVYYENDAD…GGTKAGVIET (181 aa). Residues 24 to 27, Lys-47, Ser-50, Ser-52, and 82 to 85 each bind NADP(+); these read FGSQ and DQVQ. His-107 is a catalytic residue. Gly-133 lines the NADP(+) pocket. Residues 182–327 enclose the KARI C-terminal knotted domain; sequence NFKDETETDL…EKLRGMMSWL (146 aa). Mg(2+) is bound by residues Asp-190, Glu-194, Glu-226, and Glu-230. Ser-251 is a substrate binding site.

This sequence belongs to the ketol-acid reductoisomerase family. It depends on Mg(2+) as a cofactor.

The enzyme catalyses (2R)-2,3-dihydroxy-3-methylbutanoate + NADP(+) = (2S)-2-acetolactate + NADPH + H(+). It carries out the reaction (2R,3R)-2,3-dihydroxy-3-methylpentanoate + NADP(+) = (S)-2-ethyl-2-hydroxy-3-oxobutanoate + NADPH + H(+). It participates in amino-acid biosynthesis; L-isoleucine biosynthesis; L-isoleucine from 2-oxobutanoate: step 2/4. It functions in the pathway amino-acid biosynthesis; L-valine biosynthesis; L-valine from pyruvate: step 2/4. Involved in the biosynthesis of branched-chain amino acids (BCAA). Catalyzes an alkyl-migration followed by a ketol-acid reduction of (S)-2-acetolactate (S2AL) to yield (R)-2,3-dihydroxy-isovalerate. In the isomerase reaction, S2AL is rearranged via a Mg-dependent methyl migration to produce 3-hydroxy-3-methyl-2-ketobutyrate (HMKB). In the reductase reaction, this 2-ketoacid undergoes a metal-dependent reduction by NADPH to yield (R)-2,3-dihydroxy-isovalerate. The chain is Ketol-acid reductoisomerase (NADP(+)) from Chloroherpeton thalassium (strain ATCC 35110 / GB-78).